Consider the following 202-residue polypeptide: Adenylyl-sulfate kinase (202 aa).

Position 31–38 (31–38 (GLSASGKS)) interacts with ATP. Ser-105 functions as the Phosphoserine intermediate in the catalytic mechanism.

Belongs to the APS kinase family.

It carries out the reaction adenosine 5'-phosphosulfate + ATP = 3'-phosphoadenylyl sulfate + ADP + H(+). Its pathway is sulfur metabolism; hydrogen sulfide biosynthesis; sulfite from sulfate: step 2/3. Catalyzes the synthesis of activated sulfate. The polypeptide is Adenylyl-sulfate kinase (MET14) (Saccharomyces bayanus (Yeast)).